The primary structure comprises 510 residues: Xylose import ATP-binding protein XylG (510 aa).

2 consecutive ABC transporter domains span residues 5-242 (LEMK…VGRE) and 259-505 (LRVE…LRSE). Residue 37-44 (GENGSGKS) participates in ATP binding.

This sequence belongs to the ABC transporter superfamily. Xylose importer (TC 3.A.1.2.4) family. The complex is composed of two ATP-binding proteins (XylG), two transmembrane proteins (XylH) and a solute-binding protein (XylF).

The protein resides in the cell inner membrane. The enzyme catalyses D-xylose(out) + ATP + H2O = D-xylose(in) + ADP + phosphate + H(+). Functionally, part of the ABC transporter complex XylFGH involved in xylose import. Responsible for energy coupling to the transport system. This chain is Xylose import ATP-binding protein XylG, found in Yersinia pestis.